Reading from the N-terminus, the 340-residue chain is Photosystem II protein D1 (340 aa).

Helical transmembrane passes span 25 to 42 (YIGWFGLLVFPLLSLATV), 114 to 129 (HFFLGVCGWMGREWEF), and 138 to 152 (WIFVAFSAPIAAAAA). His-114 contributes to the chlorophyll a binding site. Trp-122 lines the pheophytin a pocket. The [CaMn4O5] cluster site is built by Asp-166 and Glu-185. Residues 193–214 (FHILGVAGVFGGSLFSAMHGSL) traverse the membrane as a helical segment. Residue His-194 coordinates chlorophyll a. Residues His-211 and 260-261 (SF) each bind a quinone. His-211 provides a ligand contact to Fe cation. Position 268 (His-268) interacts with Fe cation. A helical membrane pass occupies residues 270–284 (FLAAWPVIGIWITSL). His-328, Glu-329, Asp-338, and Ala-340 together coordinate [CaMn4O5] cluster.

It belongs to the reaction center PufL/M/PsbA/D family. As to quaternary structure, PSII is composed of 1 copy each of membrane proteins PsbA, PsbB, PsbC, PsbD, PsbE, PsbF, PsbH, PsbI, PsbJ, PsbK, PsbL, PsbM, PsbT, PsbX, PsbY, PsbZ, Psb30/Ycf12, at least 3 peripheral proteins of the oxygen-evolving complex and a large number of cofactors. It forms dimeric complexes. The cofactor is The D1/D2 heterodimer binds P680, chlorophylls that are the primary electron donor of PSII, and subsequent electron acceptors. It shares a non-heme iron and each subunit binds pheophytin, quinone, additional chlorophylls, carotenoids and lipids. D1 provides most of the ligands for the Mn4-Ca-O5 cluster of the oxygen-evolving complex (OEC). There is also a Cl(-1) ion associated with D1 and D2, which is required for oxygen evolution. The PSII complex binds additional chlorophylls, carotenoids and specific lipids.. Tyr-157 forms a radical intermediate that is referred to as redox-active TyrZ, YZ or Y-Z.

The protein localises to the plastid. Its subcellular location is the chloroplast thylakoid membrane. It carries out the reaction 2 a plastoquinone + 4 hnu + 2 H2O = 2 a plastoquinol + O2. Functionally, photosystem II (PSII) is a light-driven water:plastoquinone oxidoreductase that uses light energy to abstract electrons from H(2)O, generating O(2) and a proton gradient subsequently used for ATP formation. It consists of a core antenna complex that captures photons, and an electron transfer chain that converts photonic excitation into a charge separation. The D1/D2 (PsbA/PsbD) reaction center heterodimer binds P680, the primary electron donor of PSII as well as several subsequent electron acceptors. This Amphidinium carterae (Dinoflagellate) protein is Photosystem II protein D1.